The primary structure comprises 736 residues: Transcriptional repressor CTCF (736 aa).

Residue M1 is modified to N-acetylmethionine. Residue K18 forms a Glycyl lysine isopeptide (Lys-Gly) (interchain with G-Cter in SUMO2) linkage. Residue K74 forms a Glycyl lysine isopeptide (Lys-Gly) (interchain with G-Cter in SUMO) linkage. The tract at residues 180–211 is disordered; sequence QGELPPQEDSSWQKDPDYQPPAKKTKKTKKSK. A compositionally biased stretch (basic residues) spans 202-211; the sequence is KKTKKTKKSK. Residue K219 forms a Glycyl lysine isopeptide (Lys-Gly) (interchain with G-Cter in SUMO2) linkage. Residues 266-288 form a C2H2-type 1 zinc finger; that stretch reads FQCELCSYTCPRRSNLDRHMKSH. T289 carries the phosphothreonine modification. The C2H2-type 2 zinc-finger motif lies at 294-316; the sequence is HKCHLCGRAFRTVTLLRNHLNTH. T317 is modified (phosphothreonine). 2 C2H2-type zinc fingers span residues 322-345 and 351-373; these read HKCP…RYKH and FKCS…IRSH. The residue at position 374 (T374) is a Phosphothreonine. Residues 379 to 401 form a C2H2-type 5 zinc finger; it reads FQCSLCSYASRDTYKLKRHMRTH. Phosphoserine is present on S402. C2H2-type zinc fingers lie at residues 407–430, 437–460, 467–489, 495–517, and 523–546; these read YECY…LQKH, FHCP…RKQH, KKCR…QKSH, FKCD…KRTH, and YACS…KRYH. A C2H2-type 11; atypical zinc finger spans residues 555–577; that stretch reads FVCSKCGKTFTRRNTMARHADNC. A disordered region spans residues 573 to 686; it reads HADNCAGPDG…TAIIQVEDQN (114 aa). Basic residues predominate over residues 593 to 604; it reads KSKRGRKRKMRS. S609, S610, and S612 each carry phosphoserine. The segment covering 610 to 637 has biased composition (acidic residues); the sequence is SDSEENAEPDLDDNEEEEEPAVEIEPEP. The span at 638–656 shows a compositional bias: pro residues; that stretch reads EPQPQPPPPPQPVAPAPPP. Positions 667 to 686 are enriched in polar residues; that stretch reads RTNQPKQNQPTAIIQVEDQN. K698 participates in a covalent cross-link: Glycyl lysine isopeptide (Lys-Gly) (interchain with G-Cter in SUMO); alternate. K698 is covalently cross-linked (Glycyl lysine isopeptide (Lys-Gly) (interchain with G-Cter in SUMO2); alternate). The interval 699–726 is disordered; it reads KEPDAEPAEGEEEEAQAATTDAPNGDLT. Residues 703 to 713 are compositionally biased toward acidic residues; that stretch reads AEPAEGEEEEA.

This sequence belongs to the CTCF zinc-finger protein family. In terms of assembly, interacts with CHD8. Interacts with LLPH. Interacts with CENPE. Interacts with BRD2; promoting BRD2 recruitment to chromatin. In terms of processing, sumoylated on Lys-74 and Lys-698; sumoylation of CTCF contributes to the repressive function of CTCF on the MYC P2 promoter.

The protein localises to the nucleus. It localises to the nucleoplasm. The protein resides in the chromosome. It is found in the centromere. Chromatin binding factor that binds to DNA sequence specific sites and regulates the 3D structure of chromatin. Binds together strands of DNA, thus forming chromatin loops, and anchors DNA to cellular structures, such as the nuclear lamina. Defines the boundaries between active and heterochromatic DNA via binding to chromatin insulators, thereby preventing interaction between promoter and nearby enhancers and silencers. Plays a critical role in the epigenetic regulation. Participates in the allele-specific gene expression at the imprinted IGF2/H19 gene locus. On the maternal allele, binding within the H19 imprinting control region (ICR) mediates maternally inherited higher-order chromatin conformation to restrict enhancer access to IGF2. Mediates interchromosomal association between IGF2/H19 and WSB1/NF1 and may direct distant DNA segments to a common transcription factory. Regulates asynchronous replication of IGF2/H19. Plays a critical role in gene silencing over considerable distances in the genome. Preferentially interacts with unmethylated DNA, preventing spreading of CpG methylation and maintaining methylation-free zones. Inversely, binding to target sites is prevented by CpG methylation. Plays an important role in chromatin remodeling. Can dimerize when it is bound to different DNA sequences, mediating long-range chromatin looping. Causes local loss of histone acetylation and gain of histone methylation in the beta-globin locus, without affecting transcription. When bound to chromatin, it provides an anchor point for nucleosomes positioning. Seems to be essential for homologous X-chromosome pairing. May participate with Tsix in establishing a regulatable epigenetic switch for X chromosome inactivation. May play a role in preventing the propagation of stable methylation at the escape genes from X-inactivation. Involved in sister chromatid cohesion. Associates with both centromeres and chromosomal arms during metaphase and required for cohesin localization to CTCF sites. Plays a role in the recruitment of CENPE to the pericentromeric/centromeric regions of the chromosome during mitosis. Acts as a transcriptional repressor binding to promoters of vertebrate MYC gene and BAG1 gene. Also binds to the PLK and PIM1 promoters. Acts as a transcriptional activator of APP. Regulates APOA1/C3/A4/A5 gene cluster and controls MHC class II gene expression. Plays an essential role in oocyte and preimplantation embryo development by activating or repressing transcription. Seems to act as tumor suppressor. The sequence is that of Transcriptional repressor CTCF (Ctcf) from Mus musculus (Mouse).